Reading from the N-terminus, the 278-residue chain is Purine nucleoside phosphorylase YlmD (278 aa).

3 residues coordinate Zn(2+): His-87, Cys-132, and His-149.

The protein belongs to the purine nucleoside phosphorylase YfiH/LACC1 family. Homodimer. The cofactor is Cu(2+). Zn(2+) is required as a cofactor.

The catalysed reaction is adenosine + phosphate = alpha-D-ribose 1-phosphate + adenine. It catalyses the reaction S-methyl-5'-thioadenosine + phosphate = 5-(methylsulfanyl)-alpha-D-ribose 1-phosphate + adenine. It carries out the reaction inosine + phosphate = alpha-D-ribose 1-phosphate + hypoxanthine. The enzyme catalyses adenosine + H2O + H(+) = inosine + NH4(+). Its function is as follows. Purine nucleoside enzyme that catalyzes the phosphorolysis of adenosine and inosine nucleosides, yielding D-ribose 1-phosphate and the respective free bases, adenine and hypoxanthine. Also catalyzes the phosphorolysis of S-methyl-5'-thioadenosine into adenine and S-methyl-5-thio-alpha-D-ribose 1-phosphate. Also has adenosine deaminase activity. This chain is Purine nucleoside phosphorylase YlmD (ylmD), found in Bacillus subtilis (strain 168).